We begin with the raw amino-acid sequence, 157 residues long: ATP synthase subunit b (157 aa).

Residues 7 to 27 traverse the membrane as a helical segment; that stretch reads LIAQLVVFFILAWFTMKFVWP.

Belongs to the ATPase B chain family. F-type ATPases have 2 components, F(1) - the catalytic core - and F(0) - the membrane proton channel. F(1) has five subunits: alpha(3), beta(3), gamma(1), delta(1), epsilon(1). F(0) has three main subunits: a(1), b(2) and c(10-14). The alpha and beta chains form an alternating ring which encloses part of the gamma chain. F(1) is attached to F(0) by a central stalk formed by the gamma and epsilon chains, while a peripheral stalk is formed by the delta and b chains.

The protein resides in the cell inner membrane. Functionally, f(1)F(0) ATP synthase produces ATP from ADP in the presence of a proton or sodium gradient. F-type ATPases consist of two structural domains, F(1) containing the extramembraneous catalytic core and F(0) containing the membrane proton channel, linked together by a central stalk and a peripheral stalk. During catalysis, ATP synthesis in the catalytic domain of F(1) is coupled via a rotary mechanism of the central stalk subunits to proton translocation. Component of the F(0) channel, it forms part of the peripheral stalk, linking F(1) to F(0). This chain is ATP synthase subunit b, found in Azoarcus sp. (strain BH72).